The chain runs to 406 residues: Sprouty-related, EVH1 domain-containing protein 1 (406 aa).

A WH1 domain is found at 3–120 (GEQEPDDSYA…RGIRRAIEDL (118 aa)). Positions 124–154 (LPASCHGESETSEDGPQVNKEDHYSTHNNDH) are disordered. The segment covering 142 to 154 (NKEDHYSTHNNDH) has biased composition (basic and acidic residues). One can recognise a KBD domain in the interval 195–247 (PIRHVSFQDEDEIVRINPRDMIIRRYADYRHPDIFRNDVDREEPEDVTFFTKT). The region spanning 296-404 (SCVYCQERFN…CGCCGGKHKA (109 aa)) is the SPR domain.

Palmitoylated by ZDHHC17/HIP14. Post-translationally, ubiquitinated. In terms of processing, phosphorylated on tyrosine.

The protein resides in the cell membrane. In terms of biological role, tyrosine kinase substrate that inhibits growth-factor-mediated activation of MAP kinase. The protein is Sprouty-related, EVH1 domain-containing protein 1 (spred1) of Xenopus tropicalis (Western clawed frog).